Consider the following 346-residue polypeptide: Holliday junction branch migration complex subunit RuvB (346 aa).

Residues 1-11 (MTEQRTIASSA) are compositionally biased toward polar residues. The segment at 1–20 (MTEQRTIASSATREDEAADA) is disordered. The segment at 1-183 (MTEQRTIASS…FGIVQRLEFY (183 aa)) is large ATPase domain (RuvB-L). ATP contacts are provided by residues Ile22, Arg23, Gly64, Lys67, Thr68, Thr69, 130–132 (EDF), Arg173, Tyr183, and Arg220. Thr68 lines the Mg(2+) pocket. Residues 184-254 (SPQELTRIVI…VAQAAMQMLK (71 aa)) form a small ATPAse domain (RuvB-S) region. The head domain (RuvB-H) stretch occupies residues 257–346 (PEGFDELDRR…PAIGEPGDLF (90 aa)). DNA is bound by residues Arg293, Arg312, and Arg317.

It belongs to the RuvB family. As to quaternary structure, homohexamer. Forms an RuvA(8)-RuvB(12)-Holliday junction (HJ) complex. HJ DNA is sandwiched between 2 RuvA tetramers; dsDNA enters through RuvA and exits via RuvB. An RuvB hexamer assembles on each DNA strand where it exits the tetramer. Each RuvB hexamer is contacted by two RuvA subunits (via domain III) on 2 adjacent RuvB subunits; this complex drives branch migration. In the full resolvosome a probable DNA-RuvA(4)-RuvB(12)-RuvC(2) complex forms which resolves the HJ.

Its subcellular location is the cytoplasm. It carries out the reaction ATP + H2O = ADP + phosphate + H(+). In terms of biological role, the RuvA-RuvB-RuvC complex processes Holliday junction (HJ) DNA during genetic recombination and DNA repair, while the RuvA-RuvB complex plays an important role in the rescue of blocked DNA replication forks via replication fork reversal (RFR). RuvA specifically binds to HJ cruciform DNA, conferring on it an open structure. The RuvB hexamer acts as an ATP-dependent pump, pulling dsDNA into and through the RuvAB complex. RuvB forms 2 homohexamers on either side of HJ DNA bound by 1 or 2 RuvA tetramers; 4 subunits per hexamer contact DNA at a time. Coordinated motions by a converter formed by DNA-disengaged RuvB subunits stimulates ATP hydrolysis and nucleotide exchange. Immobilization of the converter enables RuvB to convert the ATP-contained energy into a lever motion, pulling 2 nucleotides of DNA out of the RuvA tetramer per ATP hydrolyzed, thus driving DNA branch migration. The RuvB motors rotate together with the DNA substrate, which together with the progressing nucleotide cycle form the mechanistic basis for DNA recombination by continuous HJ branch migration. Branch migration allows RuvC to scan DNA until it finds its consensus sequence, where it cleaves and resolves cruciform DNA. This chain is Holliday junction branch migration complex subunit RuvB, found in Xanthomonas campestris pv. campestris (strain ATCC 33913 / DSM 3586 / NCPPB 528 / LMG 568 / P 25).